A 265-amino-acid chain; its full sequence is Short-chain dehydrogenase/reductase phqE (265 aa).

Residues T23, S24, I26, S46, N47, K50, D76, R131, V203, and T205 each coordinate NADP(+). A helical transmembrane segment spans residues 25-45 (GIGFAVCAAALGHGAIVTIVG).

Belongs to the short-chain dehydrogenases/reductases (SDR) family. Requires NADP(+) as cofactor.

The protein resides in the membrane. Its pathway is alkaloid biosynthesis. Functionally, short-chain dehydrogenase/reductase; part of the gene cluster that mediates the biosynthesis of paraherquamide, a fungal indole alkaloid that belongs to a family of natural products containing a characteristic bicyclo[2.2.2]diazaoctane core. The first steps in the biosynthesis of paraherquamide is the production of the beta-methyl-proline precursor from L-isoleucine. They require oxidation of a terminally hydroxylated L-isoleucine to the corresponding aldehyde by enzymes which have still to be identified. Spontaneous cyclization and dehydration would yield the 4-methyl pyrolline-5-carboxylic acid, which is then reduced by the pyrroline-5-carboxylate reductase phqD leading to the beta-methyl-proline precursor. The next step of paraherquamide biosynthesis involves coupling of beta-methyl-proline and L-tryptophan by the bimodular NRPS phqB, to produce a monooxopiperazine intermediate. The reductase (R) domain of phqB utilizes NADPH for hydride transfer to reduce the thioester bond of the T domain-tethered linear dipeptide to a hemithioaminal intermediate, which spontaneously cleaves the C-S bond to release the aldehyde product. This compound undergoes spontaneous cyclization and dehydration to give a dienamine which is reverse prenylated at C-2 by the reverse prenyltransferase phqJ. The other prenyltransferase present in the cluster, phqI may be a redundant gene in the pathway. During biosynthetic assembly, the key step to produce the polycyclic core is catalyzed by the bifunctional reductase and intramolecular [4+2] Diels-Alderase, phqE, resulting in formation of the [2.2.2] diazaoctane intermediate preparaherquamide. Following formation of preparaherquamide, an indole 2,3-epoxidation-initiated pinacol-like rearrangement is catalyzed by the phqK FAD-dependent monooxygenase. The prenyltransferase phqA, the cytochrome P450 monooxygenase phqL, and the FAD-linked oxidoreductase phqH (or the cytochrome P450 monooxygenase phqM), are proposed to be involved in the formation of the pyran ring. The FAD-dependent monooxygenase phqK is likely responsible for generation of the spiro-oxindole, and the N-methylation is likely mediated by the phqN methyltransferase leading to the isolable natural product paraherquamide F. However, the order of these biosynthetic steps has still to be determined. In late-stage paraherquamide biosynthesis, the third P450 monooxygenase, phqO, is probably responsible for the C-14 hydroxylation, transforming paraherquamide F to paraherquamide G, and paraherquamide E to the final product paraherquamide A. The expansion from the 6-membered ring pyran (in paraherquamides F and G) to the 7-membered dioxepin ring (in paraherquamides A and E) represents a poorly understood but intriguing process that probably involves the 2-oxoglutarate-dependent dioxygenase phqC. Finally, the remaining members of the paraherquamide cluster, including phqI as well as phqM (or phqH), do not have a clearly prescribed role and appear to be redundant. The sequence is that of Short-chain dehydrogenase/reductase phqE from Penicillium fellutanum.